A 141-amino-acid polypeptide reads, in one-letter code: Large-conductance mechanosensitive channel (141 aa).

2 helical membrane-spanning segments follow: residues 16-36 (VIDL…VDSL) and 86-106 (GNFI…FLMV).

It belongs to the MscL family. Homopentamer.

It localises to the cell inner membrane. Channel that opens in response to stretch forces in the membrane lipid bilayer. May participate in the regulation of osmotic pressure changes within the cell. The sequence is that of Large-conductance mechanosensitive channel from Ralstonia nicotianae (strain ATCC BAA-1114 / GMI1000) (Ralstonia solanacearum).